The chain runs to 309 residues: Ribosomal RNA small subunit methyltransferase H (309 aa).

S-adenosyl-L-methionine-binding positions include Gly-33–His-35, Asp-53, Phe-79, Asp-100, and Gln-107.

Belongs to the methyltransferase superfamily. RsmH family.

Its subcellular location is the cytoplasm. It catalyses the reaction cytidine(1402) in 16S rRNA + S-adenosyl-L-methionine = N(4)-methylcytidine(1402) in 16S rRNA + S-adenosyl-L-homocysteine + H(+). Functionally, specifically methylates the N4 position of cytidine in position 1402 (C1402) of 16S rRNA. In Clostridium botulinum (strain 657 / Type Ba4), this protein is Ribosomal RNA small subunit methyltransferase H.